We begin with the raw amino-acid sequence, 2426 residues long: Protein SON (2426 aa).

Position 2 is an N-acetylalanine (Ala-2). Lys-16 is modified (N6-acetyllysine). Polar residues predominate over residues 24–42; that stretch reads LSSGRNEGQLNGETNTPIE. The disordered stretch occupies residues 24–56; sequence LSSGRNEGQLNGETNTPIEGNQAGDAAASARSL. A Glycyl lysine isopeptide (Lys-Gly) (interchain with G-Cter in SUMO2) cross-link involves residue Lys-64. A compositionally biased stretch (basic and acidic residues) spans 77 to 88; it reads LRYKPDLKEGSR. A disordered region spans residues 77–155; the sequence is LRYKPDLKEG…GNIDLESDSF (79 aa). At Ser-94 the chain carries Phosphoserine. Positions 106-130 are enriched in basic residues; that stretch reads KKSKKHKKHKNKKKKKKKEKEKKYK. Basic and acidic residues predominate over residues 131 to 146; it reads RQPEESESKTKSHDDG. Ser-142, Ser-152, Ser-154, Ser-160, and Ser-283 each carry phosphoserine. At Lys-288 the chain carries N6-acetyllysine. Residues 305-328 are disordered; sequence TLVVSSETPTEVYPEPSTSTTMDF. Thr-400 carries the post-translational modification Phosphothreonine. Residues 406 to 442 are disordered; it reads PGPSATPVPELPGPLSTPVPELPGPPATAVPELPGPS. Over residues 409-442 the composition is skewed to pro residues; it reads SATPVPELPGPLSTPVPELPGPPATAVPELPGPS. Positions 726–895 are 17 X 10 AA tandem repeats of L-A-[ST]-[NSG]-[TS]-MDSQM; the sequence is LASNTMDSQM…LASGTMDAQM (170 aa). The segment at 912 to 988 is 11 X 7 AA tandem repeats of [DR]-P-Y-R-[LI][AG][QHP]; it reads DPYRLAQDPY…IAPRPYRLAP (77 aa). An Omega-N-methylarginine modification is found at Arg-950. Thr-959 carries the phosphothreonine modification. Position 998 is a phosphoserine (Ser-998). A run of 14 repeats spans residues 1006-1011, 1014-1019, 1021-1026, 1030-1035, 1038-1043, 1046-1051, 1055-1060, 1063-1068, 1071-1076, 1080-1085, 1089-1094, 1100-1105, 1111-1116, and 1121-1126. Residues 1006–1126 form a 14 X 6 AA repeats of [ED]-R-S-M-M-S region; sequence ERSMMSSYER…SYTADRSMMS (121 aa). Arg-1007 bears the Asymmetric dimethylarginine mark. Position 1022 is an asymmetric dimethylarginine (Arg-1022). Ser-1035 and Ser-1043 each carry phosphoserine. Ser-1060 and Ser-1068 each carry phosphoserine. Residue Ser-1082 is modified to Phosphoserine. The disordered stretch occupies residues 1144-1236; it reads YMVPPLPPEE…PTDYSVSASD (93 aa). The interval 1147-1179 is 3 X 11 AA tandem repats of P-P-L-P-P-E-E-P-P-[TME]-[MTG]; the sequence is PPLPPEEPPTMPPLPPEEPPMTPPLPPEEPPEG. Pro residues predominate over residues 1147–1180; it reads PPLPPEEPPTMPPLPPEEPPMTPPLPPEEPPEGP. Residues 1186-1196 are compositionally biased toward polar residues; the sequence is QSALTAENTWP. The segment covering 1198 to 1224 has biased composition (low complexity); sequence EVPSSPSEESVSQPEPPVSQSEISEPS. The tract at residues 1359–1390 is 4 X 8 AA tandem repeats of V-L-E-SS-[AVT]-VT; sequence VLESSAVTVLESSTVTVLESSTVTVLEPSVVT. Phosphoserine is present on residues Ser-1556 and Ser-1651. The interval 1645-1722 is disordered; it reads TSPSGGSEAD…KETLPDSGFS (78 aa). Basic and acidic residues predominate over residues 1677–1689; that stretch reads KDTEEPLPVKESD. A phosphoserine mark is found at Ser-1697, Ser-1701, Ser-1747, Ser-1759, Ser-1766, Ser-1769, Ser-1782, and Ser-1783. The segment at 1754 to 2054 is disordered; it reads GPLLASDVGR…RSPKRLTDLD (301 aa). 3 stretches are compositionally biased toward basic and acidic residues: residues 1790–1801, 1809–1822, and 1830–1845; these read YEIFVKVKDTHE, RDKG…DSSL, and KSSE…ESRS. 2 stretches are compositionally biased toward basic residues: residues 1846 to 1909 and 1917 to 1948; these read RARK…RKRS and TVRA…RRRS. 9 consecutive repeat copies span residues 1925 to 1931, 1934 to 1952, 1953 to 1959, 1960 to 1966, 1967 to 1973, 1974 to 1980, 1981 to 1987, 1988 to 1994, and 1995 to 2013. Positions 1925-1994 are 7 X 7 AA repeats of P-S-R-R-S-R-[TS]; that stretch reads PSRRSRSHTP…SRTPSRRSRT (70 aa). The tract at residues 1934–2013 is 2 X 19 AA repeats of P-S-R-R-R-R-S-R-S-V-V-R-R-R-S-F-S-I-S; sequence PSRRRRSRSV…VVRRRSFSIS (80 aa). Phosphoserine occurs at positions 1948, 1950, and 1952. The segment covering 1955–2009 has biased composition (basic residues); that stretch reads RRSRTPSRRSRTPSRRSRTPSRRSRTPSRRSRTPSRRSRTPSRRRRSRSVVRRRS. Phosphoserine occurs at positions 2009, 2011, 2013, 2029, and 2031. A 3 X tandem repeats of [ST]-P-[VLI]-R-[RL]-[RK]-[RF]-S-R region spans residues 2013–2039; that stretch reads SPVRLRRSRTPLRRRFSRSPIRRKRSR. Positions 2016–2038 are enriched in basic residues; sequence RLRRSRTPLRRRFSRSPIRRKRS. Residues 2039–2054 are compositionally biased toward basic and acidic residues; the sequence is RSSERGRSPKRLTDLD. N6-acetyllysine; alternate is present on Lys-2055. A Glycyl lysine isopeptide (Lys-Gly) (interchain with G-Cter in SUMO2); alternate cross-link involves residue Lys-2055. Lys-2092 is covalently cross-linked (Glycyl lysine isopeptide (Lys-Gly) (interchain with G-Cter in SUMO2)). Ser-2129 is subject to Phosphoserine. Residue Lys-2149 forms a Glycyl lysine isopeptide (Lys-Gly) (interchain with G-Cter in SUMO2) linkage. A Phosphothreonine modification is found at Thr-2163. Residues 2200-2220 are disordered; sequence KNGEENKDDDNVFSSNLPSEP. Position 2238 is a phosphoserine (Ser-2238). One can recognise a G-patch domain in the interval 2305 to 2351; it reads TGGMGAVLMRKMGWREGEGLGKNKEGNKEPILVDFKTDRKGLVAVGE. The DRBM domain maps to 2371 to 2426; sequence HPVSALMEICNKRRWQPPEFLLVHDSGPDHRKHFLFRVLRNGALTRPNCMFFLNRY.

Interacts with SRSF2. Associates with the spliceosome. Interacts with the AML1-MTG8 (AML1-ETO) fusion protein, possibly leading to trigger signals inhibiting leukemogenesis. Interacts with USH1G. Widely expressed, with the higher expression seen in leukocyte and heart.

The protein resides in the nucleus speckle. In terms of biological role, RNA-binding protein that acts as a mRNA splicing cofactor by promoting efficient splicing of transcripts that possess weak splice sites. Specifically promotes splicing of many cell-cycle and DNA-repair transcripts that possess weak splice sites, such as TUBG1, KATNB1, TUBGCP2, AURKB, PCNT, AKT1, RAD23A, and FANCG. Probably acts by facilitating the interaction between Serine/arginine-rich proteins such as SRSF2 and the RNA polymerase II. Also binds to DNA; binds to the consensus DNA sequence: 5'-GA[GT]AN[CG][AG]CC-3'. May indirectly repress hepatitis B virus (HBV) core promoter activity and transcription of HBV genes and production of HBV virions. Essential for correct RNA splicing of multiple genes critical for brain development, neuronal migration and metabolism, including TUBG1, FLNA, PNKP, WDR62, PSMD3, PCK2, PFKL, IDH2, and ACY1. The sequence is that of Protein SON (SON) from Homo sapiens (Human).